The following is a 71-amino-acid chain: Pseudonajatoxin b (71 aa).

5 disulfide bridges follow: Cys3–Cys21, Cys14–Cys42, Cys27–Cys31, Cys46–Cys58, and Cys59–Cys64.

It belongs to the three-finger toxin family. Long-chain subfamily. Type II alpha-neurotoxin sub-subfamily. In terms of tissue distribution, expressed by the venom gland.

The protein resides in the secreted. Binds with high affinity to muscular (alpha-1/CHRNA1) and neuronal (alpha-7/CHRNA7) nicotinic acetylcholine receptor (nAChR) and inhibits acetylcholine from binding to the receptor, thereby impairing neuromuscular and neuronal transmission. The chain is Pseudonajatoxin b from Pseudonaja textilis (Eastern brown snake).